The primary structure comprises 397 residues: tRNA-specific 2-thiouridylase MnmA (397 aa).

Residues 19 to 26 and Leu45 each bind ATP; that span reads AMSGGVDS. Cys113 serves as the catalytic Nucleophile. Cysteines 113 and 210 form a disulfide. Residue Gly137 participates in ATP binding. An interaction with tRNA region spans residues 160-162; that stretch reads RDQ. The active-site Cysteine persulfide intermediate is Cys210.

It belongs to the MnmA/TRMU family.

The protein localises to the cytoplasm. The enzyme catalyses S-sulfanyl-L-cysteinyl-[protein] + uridine(34) in tRNA + AH2 + ATP = 2-thiouridine(34) in tRNA + L-cysteinyl-[protein] + A + AMP + diphosphate + H(+). Functionally, catalyzes the 2-thiolation of uridine at the wobble position (U34) of tRNA, leading to the formation of s(2)U34. This chain is tRNA-specific 2-thiouridylase MnmA, found in Rhodopseudomonas palustris (strain ATCC BAA-98 / CGA009).